The primary structure comprises 530 residues: Type 2 DNA topoisomerase 6 subunit B (530 aa).

ATP contacts are provided by residues Asn42, Asp76, 96 to 98 (SSK), 107 to 113 (MYGLGVK), and Lys427.

This sequence belongs to the TOP6B family. Homodimer. Heterotetramer of two Top6A and two Top6B chains.

The enzyme catalyses ATP-dependent breakage, passage and rejoining of double-stranded DNA.. Not inhibited by the DNA gyrase inhibitor novobiocin, instead inhibited by eukaryotic topoisomerase inhibitors such as m- and o-amsacrine, ellipticine, and the quinolone CP-115,953. Radicicol inhibits the ATPase activity. Relaxes both positive and negative supercoils and exhibits a strong decatenase and unknotting activity; it cannot introduce DNA supercoils. ATP is absolutely required for DNA cleavage; the nonhydrolyzable analog AMP-PNP generates nicked or linear products from a supercoiled dsDNA substrate. Generates staggered two-nucleotide long 5' overhangs. The enzyme is covalently attached transiently to the 5'-ends of the cleaved strands. The sequence is that of Type 2 DNA topoisomerase 6 subunit B from Saccharolobus shibatae (strain ATCC 51178 / DSM 5389 / JCM 8931 / NBRC 15437 / B12) (Sulfolobus shibatae).